A 327-amino-acid polypeptide reads, in one-letter code: ATPase ASNA1 homolog (327 aa).

26–33 (KGGVGKTT) serves as a coordination point for ATP. The active site involves D57. ATP contacts are provided by E238 and N265. The Zn(2+) site is built by C274 and C277.

It belongs to the arsA ATPase family. As to quaternary structure, homodimer.

It is found in the cytoplasm. It localises to the endoplasmic reticulum. ATPase required for the post-translational delivery of tail-anchored (TA) proteins to the endoplasmic reticulum. Recognizes and selectively binds the transmembrane domain of TA proteins in the cytosol. This complex then targets to the endoplasmic reticulum by membrane-bound receptors, where the tail-anchored protein is released for insertion. This process is regulated by ATP binding and hydrolysis. ATP binding drives the homodimer towards the closed dimer state, facilitating recognition of newly synthesized TA membrane proteins. ATP hydrolysis is required for insertion. Subsequently, the homodimer reverts towards the open dimer state, lowering its affinity for the membrane-bound receptor, and returning it to the cytosol to initiate a new round of targeting. This is ATPase ASNA1 homolog from Entamoeba dispar (strain ATCC PRA-260 / SAW760).